We begin with the raw amino-acid sequence, 402 residues long: 4-hydroxy-3-methylbut-2-enyl diphosphate reductase (402 aa).

Cys-66 serves as a coordination point for [4Fe-4S] cluster. (2E)-4-hydroxy-3-methylbut-2-enyl diphosphate is bound at residue His-96. His-96 is a binding site for dimethylallyl diphosphate. His-96 is an isopentenyl diphosphate binding site. Residue Cys-157 participates in [4Fe-4S] cluster binding. His-185 contributes to the (2E)-4-hydroxy-3-methylbut-2-enyl diphosphate binding site. His-185 contributes to the dimethylallyl diphosphate binding site. His-185 is an isopentenyl diphosphate binding site. The active-site Proton donor is the Glu-187. A (2E)-4-hydroxy-3-methylbut-2-enyl diphosphate-binding site is contributed by Thr-250. Cys-288 provides a ligand contact to [4Fe-4S] cluster. The (2E)-4-hydroxy-3-methylbut-2-enyl diphosphate site is built by Ser-317, Ser-318, Asn-319, and Ser-379. Residues Ser-317, Ser-318, Asn-319, and Ser-379 each coordinate dimethylallyl diphosphate. Isopentenyl diphosphate is bound by residues Ser-317, Ser-318, Asn-319, and Ser-379.

It belongs to the IspH family. It depends on [4Fe-4S] cluster as a cofactor.

It catalyses the reaction isopentenyl diphosphate + 2 oxidized [2Fe-2S]-[ferredoxin] + H2O = (2E)-4-hydroxy-3-methylbut-2-enyl diphosphate + 2 reduced [2Fe-2S]-[ferredoxin] + 2 H(+). It carries out the reaction dimethylallyl diphosphate + 2 oxidized [2Fe-2S]-[ferredoxin] + H2O = (2E)-4-hydroxy-3-methylbut-2-enyl diphosphate + 2 reduced [2Fe-2S]-[ferredoxin] + 2 H(+). Its pathway is isoprenoid biosynthesis; dimethylallyl diphosphate biosynthesis; dimethylallyl diphosphate from (2E)-4-hydroxy-3-methylbutenyl diphosphate: step 1/1. It functions in the pathway isoprenoid biosynthesis; isopentenyl diphosphate biosynthesis via DXP pathway; isopentenyl diphosphate from 1-deoxy-D-xylulose 5-phosphate: step 6/6. Its function is as follows. Catalyzes the conversion of 1-hydroxy-2-methyl-2-(E)-butenyl 4-diphosphate (HMBPP) into a mixture of isopentenyl diphosphate (IPP) and dimethylallyl diphosphate (DMAPP). Acts in the terminal step of the DOXP/MEP pathway for isoprenoid precursor biosynthesis. The protein is 4-hydroxy-3-methylbut-2-enyl diphosphate reductase of Nostoc sp. (strain PCC 7120 / SAG 25.82 / UTEX 2576).